A 687-amino-acid polypeptide reads, in one-letter code: Mediator of RNA polymerase II transcription subunit 17 (687 aa).

Positions 30 to 43 (LSSNPNSSLHSPTS) are enriched in low complexity. 2 disordered regions span residues 30–70 (LSSN…NKTK) and 130–189 (QLGS…ETDD). Composition is skewed to basic and acidic residues over residues 56-70 (TSIR…NKTK), 136-147 (SDGHNSEKKDTD), and 167-183 (KDNP…KTNE).

The protein belongs to the Mediator complex subunit 17 family. Component of the Mediator complex, which is composed of at least 21 subunits that form three structurally distinct submodules. The Mediator head module contains MED6, MED8, MED11, SRB4/MED17, SRB5/MED18, ROX3/MED19, SRB2/MED20 and SRB6/MED22, the middle module contains MED1, MED4, NUT1/MED5, MED7, CSE2/MED9, NUT2/MED10, SRB7/MED21 and SOH1/MED31, and the tail module contains MED2, PGD1/MED3, RGR1/MED14, GAL11/MED15 and SIN4/MED16. The head and the middle modules interact directly with RNA polymerase II, whereas the elongated tail module interacts with gene-specific regulatory proteins. The head module may also interact with the TFIIF complex. SRB4/MED17 interacts directly with MED6, MED11, ROX3/MED19, SRB2/MED20 and SRB6/MED22. Interacts directly with the activator GAL4.

The protein localises to the nucleus. In terms of biological role, component of the Mediator complex, a coactivator involved in the regulated transcription of nearly all RNA polymerase II-dependent genes. Mediator functions as a bridge to convey information from gene-specific regulatory proteins to the basal RNA polymerase II transcription machinery. The Mediator complex, having a compact conformation in its free form, is recruited to promoters by direct interactions with regulatory proteins and serves for the assembly of a functional preinitiation complex with RNA polymerase II and the general transcription factors. The Mediator complex unfolds to an extended conformation and partially surrounds RNA polymerase II, specifically interacting with the unphosphorylated form of the C-terminal domain (CTD) of RNA polymerase II. The Mediator complex dissociates from the RNA polymerase II holoenzyme and stays at the promoter when transcriptional elongation begins. In Saccharomyces cerevisiae (strain ATCC 204508 / S288c) (Baker's yeast), this protein is Mediator of RNA polymerase II transcription subunit 17 (SRB4).